The chain runs to 225 residues: Thymidylate kinase (225 aa).

Residue 10–17 coordinates ATP; it reads GGEGAGKT.

Belongs to the thymidylate kinase family.

The catalysed reaction is dTMP + ATP = dTDP + ADP. Phosphorylation of dTMP to form dTDP in both de novo and salvage pathways of dTTP synthesis. In Oceanobacillus iheyensis (strain DSM 14371 / CIP 107618 / JCM 11309 / KCTC 3954 / HTE831), this protein is Thymidylate kinase.